A 263-amino-acid chain; its full sequence is Cytochrome c oxidase subunit 3 (263 aa).

A run of 7 helical transmembrane segments spans residues P9–L29, F40–W60, G84–F104, I129–A149, A161–Y181, T198–L218, and A241–W261.

It belongs to the cytochrome c oxidase subunit 3 family. Component of the cytochrome c oxidase (complex IV, CIV), a multisubunit enzyme composed of a catalytic core of 3 subunits and several supernumerary subunits. The complex exists as a monomer or a dimer and forms supercomplexes (SCs) in the inner mitochondrial membrane with ubiquinol-cytochrome c oxidoreductase (cytochrome b-c1 complex, complex III, CIII).

The protein localises to the mitochondrion inner membrane. It catalyses the reaction 4 Fe(II)-[cytochrome c] + O2 + 8 H(+)(in) = 4 Fe(III)-[cytochrome c] + 2 H2O + 4 H(+)(out). Component of the cytochrome c oxidase, the last enzyme in the mitochondrial electron transport chain which drives oxidative phosphorylation. The respiratory chain contains 3 multisubunit complexes succinate dehydrogenase (complex II, CII), ubiquinol-cytochrome c oxidoreductase (cytochrome b-c1 complex, complex III, CIII) and cytochrome c oxidase (complex IV, CIV), that cooperate to transfer electrons derived from NADH and succinate to molecular oxygen, creating an electrochemical gradient over the inner membrane that drives transmembrane transport and the ATP synthase. Cytochrome c oxidase is the component of the respiratory chain that catalyzes the reduction of oxygen to water. Electrons originating from reduced cytochrome c in the intermembrane space (IMS) are transferred via the dinuclear copper A center (CU(A)) of subunit 2 and heme A of subunit 1 to the active site in subunit 1, a binuclear center (BNC) formed by heme A3 and copper B (CU(B)). The BNC reduces molecular oxygen to 2 water molecules using 4 electrons from cytochrome c in the IMS and 4 protons from the mitochondrial matrix. The sequence is that of Cytochrome c oxidase subunit 3 (COIII) from Locusta migratoria (Migratory locust).